Consider the following 132-residue polypeptide: Large ribosomal subunit protein uL22c (132 aa).

It belongs to the universal ribosomal protein uL22 family. As to quaternary structure, part of the 50S ribosomal subunit.

The protein resides in the plastid. It localises to the chloroplast. In terms of biological role, this protein binds specifically to 23S rRNA. Functionally, the globular domain of the protein is located near the polypeptide exit tunnel on the outside of the subunit, while an extended beta-hairpin is found that lines the wall of the exit tunnel in the center of the 70S ribosome. This Staurastrum punctulatum (Green alga) protein is Large ribosomal subunit protein uL22c (rpl22).